The primary structure comprises 123 residues: UPF0102 protein Dole_2298 (123 aa).

The protein belongs to the UPF0102 family.

The chain is UPF0102 protein Dole_2298 from Desulfosudis oleivorans (strain DSM 6200 / JCM 39069 / Hxd3) (Desulfococcus oleovorans).